The chain runs to 386 residues: tRNA-specific 2-thiouridylase MnmA (386 aa).

ATP contacts are provided by residues 9–16 and Met-35; that span reads GMSGGVDS. An interaction with target base in tRNA region spans residues 95 to 97; that stretch reads NPD. Residue Cys-100 is the Nucleophile of the active site. An intrachain disulfide couples Cys-100 to Cys-196. Residue Gly-124 coordinates ATP. An interaction with tRNA region spans residues 146-148; it reads KDQ. Residue Cys-196 is the Cysteine persulfide intermediate of the active site. Residues 308–309 are interaction with tRNA; it reads RY.

Belongs to the MnmA/TRMU family.

It localises to the cytoplasm. The catalysed reaction is S-sulfanyl-L-cysteinyl-[protein] + uridine(34) in tRNA + AH2 + ATP = 2-thiouridine(34) in tRNA + L-cysteinyl-[protein] + A + AMP + diphosphate + H(+). Functionally, catalyzes the 2-thiolation of uridine at the wobble position (U34) of tRNA, leading to the formation of s(2)U34. The sequence is that of tRNA-specific 2-thiouridylase MnmA from Burkholderia thailandensis (strain ATCC 700388 / DSM 13276 / CCUG 48851 / CIP 106301 / E264).